Here is a 164-residue protein sequence, read N- to C-terminus: Pyruvoyl-dependent arginine decarboxylase (164 aa).

The residue at position 52 (Ser52) is a Pyruvic acid (Ser).

It belongs to the PdaD family. Pyruvate is required as a cofactor.

It catalyses the reaction L-arginine + H(+) = agmatine + CO2. This chain is Pyruvoyl-dependent arginine decarboxylase, found in Methanococcus vannielii (strain ATCC 35089 / DSM 1224 / JCM 13029 / OCM 148 / SB).